A 771-amino-acid chain; its full sequence is Solute carrier family 7 member 14 (771 aa).

The next 6 helical transmembrane spans lie at 58-78 (LISLGVGSCVGTGMYVVSGLV), 83-103 (AGPGVIVSFIIAAVASILSGV), 130-150 (FVAFFIGWNLILEYLIGTAAG), 187-207 (YPDLLALVIAIIVTIIVALGV), 216-236 (VLNVLNLAVWVFIMIAGFFFI), and 251-271 (WSGVLQGAATCFYAFIGFDII). N282 is a glycosylation site (N-linked (GlcNAc...) asparagine). Helical transmembrane passes span 291-311 (ASLVICLTAYVSVSMILTLMV), 336-356 (FVVAIGSVAGLTVSLLGSLFP), 360-380 (VIYAMAGDGLLFRFLAHVSSY), 384-404 (PVVACIVSGFLAALLSLLVSL), and 407-427 (LIEMMSIGTLLAYTLVSVCVL). S465, S468, and S488 each carry phosphoserine. Transmembrane regions (helical) follow at residues 565-585 (VTICVLLLFILMFVFCSFIIF), 596-616 (WAILLVVLMVLLISALVFVIL), 628-648 (MAPCLPFVPAFAMLVNIYLML), and 655-675 (WIRFAVWCFVGMLIYFGYGIW). Residue N676 is glycosylated (N-linked (GlcNAc...) asparagine). The tract at residues 712-771 (TEGESQENWGGPAEDKGFYYQQMSDTQPNTRTSSKAKSKSKHKQNSEALIANDELDYSPE) is disordered. Over residues 732 to 743 (QQMSDTQPNTRT) the composition is skewed to polar residues. Residues 745 to 754 (SKAKSKSKHK) are compositionally biased toward basic residues. 2 positions are modified to phosphoserine: S757 and S769.

The protein belongs to the amino acid-polyamine-organocation (APC) superfamily. Cationic amino acid transporter (CAT) (TC 2.A.3.3) family.

The protein resides in the lysosome membrane. It catalyses the reaction 4-aminobutanoate(in) = 4-aminobutanoate(out). Functionally, imports 4-aminobutanoate (GABA) into lysosomes. May act as a GABA sensor that regulates mTORC2-dependent INS signaling and gluconeogenesis. The transport mechanism and substrate selectivity remain to be elucidated. This Bos taurus (Bovine) protein is Solute carrier family 7 member 14.